A 207-amino-acid polypeptide reads, in one-letter code: Thiamine-phosphate synthase (207 aa).

4-amino-2-methyl-5-(diphosphooxymethyl)pyrimidine-binding positions include 37–41 and Asn-69; that span reads QYRHK. Asp-70 and Asp-89 together coordinate Mg(2+). 2 residues coordinate 4-amino-2-methyl-5-(diphosphooxymethyl)pyrimidine: Ser-108 and Lys-138. Residues Gly-165 and 185 to 186 each bind 2-[(2R,5Z)-2-carboxy-4-methylthiazol-5(2H)-ylidene]ethyl phosphate; that span reads IS.

This sequence belongs to the thiamine-phosphate synthase family. Mg(2+) serves as cofactor.

The enzyme catalyses 2-[(2R,5Z)-2-carboxy-4-methylthiazol-5(2H)-ylidene]ethyl phosphate + 4-amino-2-methyl-5-(diphosphooxymethyl)pyrimidine + 2 H(+) = thiamine phosphate + CO2 + diphosphate. It catalyses the reaction 2-(2-carboxy-4-methylthiazol-5-yl)ethyl phosphate + 4-amino-2-methyl-5-(diphosphooxymethyl)pyrimidine + 2 H(+) = thiamine phosphate + CO2 + diphosphate. It carries out the reaction 4-methyl-5-(2-phosphooxyethyl)-thiazole + 4-amino-2-methyl-5-(diphosphooxymethyl)pyrimidine + H(+) = thiamine phosphate + diphosphate. It participates in cofactor biosynthesis; thiamine diphosphate biosynthesis; thiamine phosphate from 4-amino-2-methyl-5-diphosphomethylpyrimidine and 4-methyl-5-(2-phosphoethyl)-thiazole: step 1/1. Condenses 4-methyl-5-(beta-hydroxyethyl)thiazole monophosphate (THZ-P) and 2-methyl-4-amino-5-hydroxymethyl pyrimidine pyrophosphate (HMP-PP) to form thiamine monophosphate (TMP). The protein is Thiamine-phosphate synthase of Janthinobacterium sp. (strain Marseille) (Minibacterium massiliensis).